Here is a 378-residue protein sequence, read N- to C-terminus: Nitronate monooxygenase (378 aa).

A propeptide spanning residues 1–15 (MHFPGHSSKKEESAQ) is cleaved from the precursor. An FMN-binding site is contributed by 37 to 39 (PMY). Residue His-196 is the Proton acceptor of the active site. His-196 contacts substrate. FMN contacts are provided by residues 229–231 (AGG) and 252–253 (GT).

This sequence belongs to the nitronate monooxygenase family. NMO class II subfamily. Homodimer. FMN is required as a cofactor.

It catalyses the reaction ethylnitronate + O2 = chemical entity + acetaldehyde + nitrite + H(+). Catalyzes the oxidation of alkyl nitronates to produce the corresponding carbonyl compounds and nitrites. Anionic forms of nitroalkanes are much better substrates than are neutral forms. The sequence is that of Nitronate monooxygenase (ncd-2) from Neurospora crassa (strain ATCC 24698 / 74-OR23-1A / CBS 708.71 / DSM 1257 / FGSC 987).